Consider the following 339-residue polypeptide: Phenylalanine--tRNA ligase alpha subunit (339 aa).

A Mg(2+)-binding site is contributed by Glu-254.

This sequence belongs to the class-II aminoacyl-tRNA synthetase family. Phe-tRNA synthetase alpha subunit type 1 subfamily. In terms of assembly, tetramer of two alpha and two beta subunits. Mg(2+) is required as a cofactor.

The protein resides in the cytoplasm. It carries out the reaction tRNA(Phe) + L-phenylalanine + ATP = L-phenylalanyl-tRNA(Phe) + AMP + diphosphate + H(+). The chain is Phenylalanine--tRNA ligase alpha subunit from Clostridium acetobutylicum (strain ATCC 824 / DSM 792 / JCM 1419 / IAM 19013 / LMG 5710 / NBRC 13948 / NRRL B-527 / VKM B-1787 / 2291 / W).